The primary structure comprises 308 residues: uncharacterized protein (308 aa).

The region spanning 11 to 87 (KRLDSLLASL…LKLEVLFEDK (77 aa)) is the S4 RNA-binding domain. The active site involves Asp-131.

It belongs to the pseudouridine synthase RluA family.

It catalyses the reaction a uridine in RNA = a pseudouridine in RNA. This is an uncharacterized protein from Mycoplasma genitalium (strain ATCC 33530 / DSM 19775 / NCTC 10195 / G37) (Mycoplasmoides genitalium).